Consider the following 662-residue polypeptide: Chaperone protein HtpG (662 aa).

Residues 1–352 (MSKQTLSFQA…SADLPLNVSR (352 aa)) form an a; substrate-binding region. Residues 353 to 594 (ELLQESRDVR…GDGMSTQLAR (242 aa)) form a b region. The disordered stretch occupies residues 382–402 (HDRHDSPAPQPAEGADRVSDV). The c stretch occupies residues 595–662 (LLKQAGQQAP…YVKRVNALLV (68 aa)).

Belongs to the heat shock protein 90 family. In terms of assembly, homodimer.

It is found in the cytoplasm. Functionally, molecular chaperone. Has ATPase activity. The sequence is that of Chaperone protein HtpG from Verminephrobacter eiseniae (strain EF01-2).